We begin with the raw amino-acid sequence, 323 residues long: NAC transcription factor 25 (323 aa).

One can recognise an NAC domain in the interval 16 to 177; the sequence is LPPGFRFHPT…DWVLCRIYKK (162 aa). Residues 114–183 mediate DNA binding; sequence VGVKKALVFY…IYKKNSSQRP (70 aa). The segment covering 201-221 has biased composition (low complexity); sequence KSSANSSSTSVLDNNDNNNNN. Positions 201–223 are disordered; that stretch reads KSSANSSSTSVLDNNDNNNNNNE.

As to expression, expressed specifically in the tapetum.

It is found in the nucleus. Functionally, transcription factor of the NAC family. May be associated with anther development and pollen production. Required for normal seed development and morphology. This Arabidopsis thaliana (Mouse-ear cress) protein is NAC transcription factor 25 (NAC025).